The following is a 3206-amino-acid chain: Genome polyprotein (3206 aa).

A Peptidase S30 domain is found at 255 to 397 (KMKTESIDVL…WRKMFQIDHF (143 aa)). Active-site for P1 proteinase activity residues include His-307, Asp-316, and Ser-348. An Involved in interaction with stylet and aphid transmission motif is present at residues 450–453 (RITC). Positions 708 to 710 (PTR) match the Involved in virions binding and aphid transmission motif. In terms of domain architecture, Peptidase C6 spans 734–856 (MWIAKEGYCY…LGEMKMYRVG (123 aa)). Catalysis depends on for helper component proteinase activity residues Cys-742 and His-815. One can recognise a Helicase ATP-binding domain in the interval 1338–1490 (IAHTPDFSEY…TQFPVTIATE (153 aa)). Residue 1351-1358 (GAVGSGKS) coordinates ATP. A DECH box motif is present at residues 1440 to 1443 (DECH). The region spanning 1494 to 1668 (SFDQFVQAQG…GLPVMTSNVS (175 aa)) is the Helicase C-terminal domain. The Nuclear localization signal motif lies at 1994–2001 (KKGKKSGK). An O-(5'-phospho-RNA)-tyrosine modification is found at Tyr-2016. Residues 2150–2368 (AASLHFGLRD…VCWGGLELLD (219 aa)) enclose the Peptidase C4 domain. Active-site for nuclear inclusion protein A activity residues include His-2195, Asp-2230, and Cys-2300. In terms of domain architecture, RdRp catalytic spans 2637–2761 (WLYCDADGSR…AVRPDCEFVL (125 aa)). The segment at 2900–2979 (HYNDEGGDGS…DRDVDAGSSG (80 aa)) is disordered. Composition is skewed to basic and acidic residues over residues 2916 to 2939 (AGDETKDDERRRKEEEDRKKREES) and 2949 to 2974 (RDNKKNKNKESDTPNKLIVKSDRDVD).

It belongs to the potyviridae genome polyprotein family. Interacts with host eIF4E protein (via cap-binding region); this interaction mediates the translation of the VPg-viral RNA conjugates. Part of a complex that comprises VPg, RNA, host EIF4E and EIF4G; this interaction mediates the translation of the VPg-viral RNA conjugates. In terms of processing, VPg is uridylylated by the polymerase and is covalently attached to the 5'-end of the genomic RNA. This uridylylated form acts as a nucleotide-peptide primer for the polymerase. Post-translationally, potyviral RNA is expressed as two polyproteins which undergo post-translational proteolytic processing. Genome polyprotein is processed by NIa-pro, P1 and HC-pro proteinases resulting in the production of at least ten individual proteins. P3N-PIPO polyprotein is cleaved by P1 and HC-pro proteinases resulting in the production of three individual proteins. The P1 proteinase and the HC-pro cleave only their respective C-termini autocatalytically. 6K1 is essential for proper proteolytic separation of P3 from CI.

Its subcellular location is the host cytoplasmic vesicle. It is found in the host nucleus. It localises to the virion. The catalysed reaction is RNA(n) + a ribonucleoside 5'-triphosphate = RNA(n+1) + diphosphate. The enzyme catalyses Hydrolyzes glutaminyl bonds, and activity is further restricted by preferences for the amino acids in P6 - P1' that vary with the species of potyvirus, e.g. Glu-Xaa-Xaa-Tyr-Xaa-Gln-|-(Ser or Gly) for the enzyme from tobacco etch virus. The natural substrate is the viral polyprotein, but other proteins and oligopeptides containing the appropriate consensus sequence are also cleaved.. It carries out the reaction Hydrolyzes a Gly-|-Gly bond at its own C-terminus, commonly in the sequence -Tyr-Xaa-Val-Gly-|-Gly, in the processing of the potyviral polyprotein.. Its function is as follows. Required for aphid transmission and also has proteolytic activity. Only cleaves a Gly-Gly dipeptide at its own C-terminus. Interacts with virions and aphid stylets. Acts as a suppressor of RNA-mediated gene silencing, also known as post-transcriptional gene silencing (PTGS), a mechanism of plant viral defense that limits the accumulation of viral RNAs. May have RNA-binding activity. Has helicase activity. It may be involved in replication. In terms of biological role, indispensable for virus replication. Functionally, mediates the cap-independent, EIF4E-dependent translation of viral genomic RNAs. Binds to the cap-binding site of host EIF4E and thus interferes with the host EIF4E-dependent mRNA export and translation. VPg-RNA directly binds EIF4E and is a template for transcription. Also forms trimeric complexes with EIF4E-EIF4G, which are templates for translation. Its function is as follows. Has RNA-binding and proteolytic activities. An RNA-dependent RNA polymerase that plays an essential role in the virus replication. In terms of biological role, involved in aphid transmission, cell-to-cell and systemis movement, encapsidation of the viral RNA and in the regulation of viral RNA amplification. This is Genome polyprotein from Pisum sativum (Garden pea).